The primary structure comprises 316 residues: 4-diphosphocytidyl-2-C-methyl-D-erythritol kinase (316 aa).

Lys-32 is an active-site residue. ATP is bound at residue 126-136 (PVGAGLGGGSA). Asp-168 is a catalytic residue.

It belongs to the GHMP kinase family. IspE subfamily.

It catalyses the reaction 4-CDP-2-C-methyl-D-erythritol + ATP = 4-CDP-2-C-methyl-D-erythritol 2-phosphate + ADP + H(+). The protein operates within isoprenoid biosynthesis; isopentenyl diphosphate biosynthesis via DXP pathway; isopentenyl diphosphate from 1-deoxy-D-xylulose 5-phosphate: step 3/6. Catalyzes the phosphorylation of the position 2 hydroxy group of 4-diphosphocytidyl-2C-methyl-D-erythritol. The chain is 4-diphosphocytidyl-2-C-methyl-D-erythritol kinase from Bifidobacterium longum (strain NCC 2705).